The chain runs to 149 residues: Large ribosomal subunit protein bL20m (149 aa).

Residues 1-9 (MVFLTTRLW) constitute a mitochondrion transit peptide.

Belongs to the bacterial ribosomal protein bL20 family. In terms of assembly, component of the mitochondrial ribosome large subunit (39S) which comprises a 16S rRNA and about 50 distinct proteins. Interacts with OXA1L.

It localises to the mitochondrion. The sequence is that of Large ribosomal subunit protein bL20m (Mrpl20) from Mus musculus (Mouse).